Consider the following 378-residue polypeptide: MAFSKRVYRSLPFELVEEILKKTPAESLNRFKSTCKQWYGIITSKRFMYNHLDHSPERFIRIDDHKTVQIMDPMTGIFSDSPVPDVFRSPHSFASMVHCDGLMLCICSDSSYERTREANLAVWNPVTKKIKWIEPLDSYYETDYFGIGYDNTCRENYKIVRFSGPMSFDDTECEIYEFKSDSWRTLDTKYWDVYTQCRGVSVKGNMYWIADTKEKFILRFDFSMETFKNVCVCPPIGCTGRLGCFSGDRLPLLLQDTDFGGEEEVSTDIAVWLTNKLSDEVVSFTKYFNVTSPHLPLLQCHGDMARPGYFIGDHKNILAWCEGEVEEDDKWYTCITLYQIDQCGIRKQIETGRHRSFRYLDPFICSYVYVPSLIPVPE.

Positions 5-52 (KRVYRSLPFELVEEILKKTPAESLNRFKSTCKQWYGIITSKRFMYNHL) constitute an F-box domain.

The sequence is that of Putative F-box only protein 15 (FBX15) from Arabidopsis thaliana (Mouse-ear cress).